Here is a 398-residue protein sequence, read N- to C-terminus: Cap-specific mRNA (nucleoside-2'-O-)-methyltransferase 1 (398 aa).

The RrmJ-type SAM-dependent 2'-O-MTase domain maps to 85-298; sequence QFSNRAGHKL…ERYLVCVDFL (214 aa). 2 residues coordinate S-adenosyl-L-methionine: Gly132 and Asp211. Lys252 serves as the catalytic Proton acceptor. Positions 371-398 are disordered; that stretch reads LKAKETTTRTSAESDDSPLSSRESCKDG.

The catalysed reaction is a 5'-end (N(7)-methyl 5'-triphosphoguanosine)-ribonucleoside in mRNA + S-adenosyl-L-methionine = a 5'-end (N(7)-methyl 5'-triphosphoguanosine)-(2'-O-methyl-ribonucleoside) in mRNA + S-adenosyl-L-homocysteine + H(+). S-adenosyl-L-methionine-dependent methyltransferase that mediates RNA cap1 2'-O-ribose methylation to the 5'-cap structure of RNAs. Methylates the ribose of the first nucleotide of a m(7)GpppG-capped mRNA to produce m(7)GpppNmp (cap1). This chain is Cap-specific mRNA (nucleoside-2'-O-)-methyltransferase 1, found in Leishmania braziliensis.